Consider the following 695-residue polypeptide: Ubiquitin carboxyl-terminal hydrolase 20 (695 aa).

Disordered regions lie at residues 1–20 (MLMA…SSIL) and 42–162 (SLAL…SLFY). 2 stretches are compositionally biased toward low complexity: residues 9-20 (PSSILPRSSSIL) and 61-86 (NHDS…SQSV). Positions 112-124 (DDIDDDIWGDDDL) are enriched in acidic residues. The 301-residue stretch at 176–476 (AGLWNLGNSC…DSYILFYARE (301 aa)) folds into the USP domain. Cys185 acts as the Nucleophile in catalysis. His435 acts as the Proton acceptor in catalysis. The segment covering 556-571 (SAESSSGEESPMGELL) has biased composition (low complexity). Disordered stretches follow at residues 556–585 (SAES…PCTE) and 674–695 (AREL…LKTT).

This sequence belongs to the peptidase C19 family.

The enzyme catalyses Thiol-dependent hydrolysis of ester, thioester, amide, peptide and isopeptide bonds formed by the C-terminal Gly of ubiquitin (a 76-residue protein attached to proteins as an intracellular targeting signal).. Recognizes and hydrolyzes the peptide bond at the C-terminal Gly of ubiquitin. Involved in the processing of poly-ubiquitin precursors as well as that of ubiquitinated proteins. The sequence is that of Ubiquitin carboxyl-terminal hydrolase 20 (UBP20) from Arabidopsis thaliana (Mouse-ear cress).